Here is a 146-residue protein sequence, read N- to C-terminus: D-aminoacyl-tRNA deacylase (146 aa).

Residues 137-138 (GP) carry the Gly-cisPro motif, important for rejection of L-amino acids motif.

Belongs to the DTD family. Homodimer.

It is found in the cytoplasm. It catalyses the reaction glycyl-tRNA(Ala) + H2O = tRNA(Ala) + glycine + H(+). The enzyme catalyses a D-aminoacyl-tRNA + H2O = a tRNA + a D-alpha-amino acid + H(+). Functionally, an aminoacyl-tRNA editing enzyme that deacylates mischarged D-aminoacyl-tRNAs. Also deacylates mischarged glycyl-tRNA(Ala), protecting cells against glycine mischarging by AlaRS. Acts via tRNA-based rather than protein-based catalysis; rejects L-amino acids rather than detecting D-amino acids in the active site. By recycling D-aminoacyl-tRNA to D-amino acids and free tRNA molecules, this enzyme counteracts the toxicity associated with the formation of D-aminoacyl-tRNA entities in vivo and helps enforce protein L-homochirality. This is D-aminoacyl-tRNA deacylase from Psychrobacter sp. (strain PRwf-1).